The following is a 277-amino-acid chain: Phosphatidylserine decarboxylase proenzyme (277 aa).

Residues Asp88, His144, and Ser242 each act as charge relay system; for autoendoproteolytic cleavage activity in the active site. The Schiff-base intermediate with substrate; via pyruvic acid; for decarboxylase activity role is filled by Ser242. Pyruvic acid (Ser); by autocatalysis is present on Ser242.

This sequence belongs to the phosphatidylserine decarboxylase family. PSD-B subfamily. Prokaryotic type I sub-subfamily. As to quaternary structure, heterodimer of a large membrane-associated beta subunit and a small pyruvoyl-containing alpha subunit. Requires pyruvate as cofactor. Post-translationally, is synthesized initially as an inactive proenzyme. Formation of the active enzyme involves a self-maturation process in which the active site pyruvoyl group is generated from an internal serine residue via an autocatalytic post-translational modification. Two non-identical subunits are generated from the proenzyme in this reaction, and the pyruvate is formed at the N-terminus of the alpha chain, which is derived from the carboxyl end of the proenzyme. The autoendoproteolytic cleavage occurs by a canonical serine protease mechanism, in which the side chain hydroxyl group of the serine supplies its oxygen atom to form the C-terminus of the beta chain, while the remainder of the serine residue undergoes an oxidative deamination to produce ammonia and the pyruvoyl prosthetic group on the alpha chain. During this reaction, the Ser that is part of the protease active site of the proenzyme becomes the pyruvoyl prosthetic group, which constitutes an essential element of the active site of the mature decarboxylase.

The protein resides in the cell membrane. It catalyses the reaction a 1,2-diacyl-sn-glycero-3-phospho-L-serine + H(+) = a 1,2-diacyl-sn-glycero-3-phosphoethanolamine + CO2. Its pathway is phospholipid metabolism; phosphatidylethanolamine biosynthesis; phosphatidylethanolamine from CDP-diacylglycerol: step 2/2. Catalyzes the formation of phosphatidylethanolamine (PtdEtn) from phosphatidylserine (PtdSer). This is Phosphatidylserine decarboxylase proenzyme from Psychrobacter cryohalolentis (strain ATCC BAA-1226 / DSM 17306 / VKM B-2378 / K5).